Reading from the N-terminus, the 411-residue chain is Dual-specificity RNA methyltransferase RlmN (411 aa).

Glutamate 125 functions as the Proton acceptor in the catalytic mechanism. The region spanning 131-380 (EEGRGTLCIS…IRTPRGRDIL (250 aa)) is the Radical SAM core domain. A disulfide bond links cysteine 138 and cysteine 383. The [4Fe-4S] cluster site is built by cysteine 145, cysteine 149, and cysteine 152. Residues 209 to 210 (GE), serine 241, 263 to 265 (SLH), and asparagine 340 each bind S-adenosyl-L-methionine. Cysteine 383 serves as the catalytic S-methylcysteine intermediate.

This sequence belongs to the radical SAM superfamily. RlmN family. Requires [4Fe-4S] cluster as cofactor.

The protein localises to the cytoplasm. It catalyses the reaction adenosine(2503) in 23S rRNA + 2 reduced [2Fe-2S]-[ferredoxin] + 2 S-adenosyl-L-methionine = 2-methyladenosine(2503) in 23S rRNA + 5'-deoxyadenosine + L-methionine + 2 oxidized [2Fe-2S]-[ferredoxin] + S-adenosyl-L-homocysteine. The enzyme catalyses adenosine(37) in tRNA + 2 reduced [2Fe-2S]-[ferredoxin] + 2 S-adenosyl-L-methionine = 2-methyladenosine(37) in tRNA + 5'-deoxyadenosine + L-methionine + 2 oxidized [2Fe-2S]-[ferredoxin] + S-adenosyl-L-homocysteine. In terms of biological role, specifically methylates position 2 of adenine 2503 in 23S rRNA and position 2 of adenine 37 in tRNAs. m2A2503 modification seems to play a crucial role in the proofreading step occurring at the peptidyl transferase center and thus would serve to optimize ribosomal fidelity. The polypeptide is Dual-specificity RNA methyltransferase RlmN (Brucella melitensis biotype 2 (strain ATCC 23457)).